We begin with the raw amino-acid sequence, 3079 residues long: Inhibitory regulator protein IRA2 (3079 aa).

A disordered region spans residues 392–554 (NQNAHQGSSS…RASYDAHKTG (163 aa)). Over residues 399–416 (SSSPSSSSPSSPPSSSSS) the composition is skewed to low complexity. Residues 417 to 442 (DNNNQNIIAKSLSRQLSHHQSYIQQQ) show a composition bias toward polar residues. Low complexity predominate over residues 449-477 (SSWTTNSQSSTSLSSSTSNSTTTDFSTHT). The segment covering 488–497 (DTPTMSNITI) has biased composition (polar residues). The segment covering 498-528 (SASSLLSQTPTPTTQLQQRLNSAAAAAAAAA) has biased composition (low complexity). Residues 529 to 546 (SPSNSTPTGYTAEQQSRA) show a composition bias toward polar residues. At threonine 635 the chain carries Phosphothreonine. Disordered stretches follow at residues 867–898 (FKGS…PLGL), 912–935 (GSST…LSSD), and 952–980 (GPSS…VQRP). 2 stretches are compositionally biased toward low complexity: residues 873 to 894 (SLCS…TPVS) and 921 to 934 (NVNS…NLSS). Residues 961-980 (IPTTLTSPPGTEKSSPVQRP) show a composition bias toward polar residues. Positions 1717 to 1922 (NATHIVVAQL…DRIFRFLAEL (206 aa)) constitute a Ras-GAP domain.

The protein localises to the cytoplasm. Its function is as follows. Inhibitory regulator of the Ras-cyclic AMP pathway. Stimulates the GTPase activity of Ras proteins. This is Inhibitory regulator protein IRA2 (IRA2) from Saccharomyces cerevisiae (strain ATCC 204508 / S288c) (Baker's yeast).